A 120-amino-acid chain; its full sequence is uncharacterized protein (120 aa).

Residues 80–99 (PTRKLQTPLNEPPRTWRKTA) are disordered.

This is an uncharacterized protein from Goose circovirus (GoCV).